The primary structure comprises 235 residues: Phosphoribosylformylglycinamidine synthase subunit PurQ (235 aa).

The region spanning 4-234 (GILVFPGTNC…VQHLTGRVIR (231 aa)) is the Glutamine amidotransferase type-1 domain. The active-site Nucleophile is the Cys-86. Catalysis depends on residues His-203 and Glu-205.

Part of the FGAM synthase complex composed of 1 PurL, 1 PurQ and 2 PurS subunits.

Its subcellular location is the cytoplasm. It carries out the reaction N(2)-formyl-N(1)-(5-phospho-beta-D-ribosyl)glycinamide + L-glutamine + ATP + H2O = 2-formamido-N(1)-(5-O-phospho-beta-D-ribosyl)acetamidine + L-glutamate + ADP + phosphate + H(+). It catalyses the reaction L-glutamine + H2O = L-glutamate + NH4(+). It functions in the pathway purine metabolism; IMP biosynthesis via de novo pathway; 5-amino-1-(5-phospho-D-ribosyl)imidazole from N(2)-formyl-N(1)-(5-phospho-D-ribosyl)glycinamide: step 1/2. Its function is as follows. Part of the phosphoribosylformylglycinamidine synthase complex involved in the purines biosynthetic pathway. Catalyzes the ATP-dependent conversion of formylglycinamide ribonucleotide (FGAR) and glutamine to yield formylglycinamidine ribonucleotide (FGAM) and glutamate. The FGAM synthase complex is composed of three subunits. PurQ produces an ammonia molecule by converting glutamine to glutamate. PurL transfers the ammonia molecule to FGAR to form FGAM in an ATP-dependent manner. PurS interacts with PurQ and PurL and is thought to assist in the transfer of the ammonia molecule from PurQ to PurL. The protein is Phosphoribosylformylglycinamidine synthase subunit PurQ of Symbiobacterium thermophilum (strain DSM 24528 / JCM 14929 / IAM 14863 / T).